Here is a 220-residue protein sequence, read N- to C-terminus: Peritrophin-55 (220 aa).

Positions 1–19 (MKSVFVCTLVLALAHHAFA) are cleaved as a signal peptide. Asn29 carries N-linked (GlcNAc...) asparagine glycosylation. Positions 33 to 95 (ITPCLGNDII…NFIPAPTCEY (63 aa)) constitute a Chitin-binding type-2 domain. A disulfide bond links Cys68 and Cys84. Over residues 116-165 (TTLKTTPSKTTPIVTTAPPSTPVPSTIVTNKPDPTTPKTTKPPKVTTTVN) the composition is skewed to low complexity. A disordered region spans residues 116-220 (TTLKTTPSKT…TPPSIVQLQN (105 aa)). The segment covering 197–210 (PTPPGMPPTPPSFG) has biased composition (pro residues).

In terms of processing, glycosylated. In terms of tissue distribution, larval peritrophic membrane.

May bind oligosaccharide structures. This Lucilia cuprina (Green bottle fly) protein is Peritrophin-55.